Reading from the N-terminus, the 223-residue chain is Ribose-5-phosphate isomerase A (223 aa).

Substrate is bound by residues 32 to 35 (TGST), 85 to 88 (DGAD), and 98 to 101 (KGGG). The Proton acceptor role is filled by glutamate 107. Substrate is bound at residue lysine 125.

The protein belongs to the ribose 5-phosphate isomerase family. As to quaternary structure, homodimer.

It catalyses the reaction aldehydo-D-ribose 5-phosphate = D-ribulose 5-phosphate. The protein operates within carbohydrate degradation; pentose phosphate pathway; D-ribose 5-phosphate from D-ribulose 5-phosphate (non-oxidative stage): step 1/1. Its function is as follows. Catalyzes the reversible conversion of ribose-5-phosphate to ribulose 5-phosphate. The polypeptide is Ribose-5-phosphate isomerase A (Pseudomonas fluorescens (strain ATCC BAA-477 / NRRL B-23932 / Pf-5)).